Here is a 782-residue protein sequence, read N- to C-terminus: Chaoptin (782 aa).

22 LRR repeats span residues 16–37 (SLLTLKLTHALSSSVQNFPSDA), 43–64 (RLEELDLSNNRLRNVPDNSFHF), 67–88 (SLKKVHLQDNTIEMIHRGTFQG), 93–114 (DLTEVYFSFNSVRNVQQHTFAD), 117–138 (QLEQIHLDDNRIESLERRAFMN), 141–162 (SLKRLNLKGNKIATIAYETFQN), 165–186 (ELEDLDLAYNSISSLDFNIFDQ), 191–212 (GMFHVNMSHNKLINLVVAPSVP), 224–245 (NIKVLDLSFNNITSVAKQFFRP), 249–270 (SLMQLYLGHNKLLNATKDLFGN), 273–294 (HLQVLDLSHNSLYELDFDTFRN), 297–318 (KLQWLDTSHNRISEIPNDLFRF), 321–342 (NLRIVDFSHNRLRSLPDNLFRE), 344–364 (GLERLDVSHNLLGKLPLTSLS), 370–391 (TLSELDLSWNSISSLSHGGQLA), 395–416 (CLSWLDLSYNRLGQIDAGTFKG), 419–442 (RLASLNLGHNSQLTLEINGLSFQG), 446–467 (TLLHLNLDNVSLSQVPALSTPN), 468–488 (LLSLSLAFNSLPTVALEVAGN), 491–512 (SLRYLNLDYNDLSAVPIVTHSL), 514–535 (ELRHLSLEGNPITTLSNTSLLG), and 539–560 (QLEELNLKNIDLTVLESGAFCK). N-linked (GlcNAc...) asparagine glycosylation is found at Asn-196, Asn-234, and Asn-262. Residues Asn-454 and Asn-488 are each glycosylated (N-linked (GlcNAc...) asparagine). A glycan (N-linked (GlcNAc...) asparagine) is linked at Asn-530. Residues Asn-618, Asn-648, and Asn-667 are each glycosylated (N-linked (GlcNAc...) asparagine).

This sequence belongs to the chaoptin family.

The protein localises to the cell membrane. Required for photoreceptor cell morphogenesis. Mediates homophilic cellular adhesion. This Tribolium castaneum (Red flour beetle) protein is Chaoptin (CHP).